The sequence spans 176 residues: Ribonuclease mitogillin (176 aa).

The N-terminal stretch at 1–27 is a signal peptide; the sequence is MVAIKNLFLLAATAVSVLAAPSPLDAR. Disulfide bonds link Cys-32-Cys-174 and Cys-102-Cys-158. His-76 is a catalytic residue. Glu-122 (proton acceptor) is an active-site residue. His-163 acts as the Proton donor in catalysis.

This sequence belongs to the ribonuclease U2 family.

It is found in the secreted. Its function is as follows. This purine-specific ribonuclease cleaves 28S RNA in eukaryotic ribosomes, inhibits protein synthesis, and shows antitumor activity. The polypeptide is Ribonuclease mitogillin (mitF) (Aspergillus fumigatus (strain ATCC MYA-4609 / CBS 101355 / FGSC A1100 / Af293) (Neosartorya fumigata)).